The primary structure comprises 229 residues: Small ribosomal subunit protein uS3 (229 aa).

One can recognise a KH type-2 domain in the interval 17 to 85; sequence VKEWIKDEVR…NPQVSVDEVE (69 aa). A disordered region spans residues 202 to 229; it reads LRGESGEDEGDKGDEQGGEAQEAEGAGA. Over residues 219–229 the composition is skewed to low complexity; it reads GEAQEAEGAGA.

It belongs to the universal ribosomal protein uS3 family. As to quaternary structure, part of the 30S ribosomal subunit.

Binds the lower part of the 30S subunit head. The sequence is that of Small ribosomal subunit protein uS3 from Archaeoglobus fulgidus (strain ATCC 49558 / DSM 4304 / JCM 9628 / NBRC 100126 / VC-16).